A 496-amino-acid chain; its full sequence is Genome polyprotein (496 aa).

Residues 1–447 (SRCTHLENRD…HTVLGGAFNS (447 aa)) lie on the Extracellular side of the membrane. 6 disulfide bridges follow: C3–C30, C60–C116, C60–C121, C74–C105, C92–C116, and C92–C121. A fusion peptide region spans residues 98-111 (DRGWGNHCGLFGKG). The N-linked (GlcNAc...) asparagine; by host glycan is linked to N154. 2 cysteine pairs are disulfide-bonded: C186–C290 and C307–C338. The chain crosses the membrane as a helical span at residues 448 to 468 (IFGGVGFLPKLLMGVALAWLG). At 469–479 (LNTRNPTMSMS) the chain is on the cytoplasmic side. The chain crosses the membrane as a helical span at residues 480 to 496 (FLLAGGLVLAMTLGVGA).

As to quaternary structure, homodimer; in the endoplasmic reticulum and Golgi. Post-translationally, N-glycosylated.

It localises to the virion membrane. It is found in the host endoplasmic reticulum membrane. Its function is as follows. Binds to host cell surface receptor and mediates fusion between viral and cellular membranes. Envelope protein is synthesized in the endoplasmic reticulum in the form of heterodimer with protein prM. They play a role in virion budding in the ER, and the newly formed immature particle is covered with 60 spikes composed of heterodimer between precursor prM and envelope protein E. The virion is transported to the Golgi apparatus where the low pH causes dissociation of PrM-E heterodimers and formation of E homodimers. prM-E cleavage is ineficient, and many virions are only partially matured. These uncleaved prM would play a role in immune evasion. This Louping ill virus (strain Negishi 3248/49/P10) (Li) protein is Genome polyprotein.